Consider the following 180-residue polypeptide: Large ribosomal subunit protein uL5 (180 aa).

Belongs to the universal ribosomal protein uL5 family. Part of the 50S ribosomal subunit; part of the 5S rRNA/L5/L18/L25 subcomplex. Contacts the 5S rRNA and the P site tRNA. Forms a bridge to the 30S subunit in the 70S ribosome.

Functionally, this is one of the proteins that bind and probably mediate the attachment of the 5S RNA into the large ribosomal subunit, where it forms part of the central protuberance. In the 70S ribosome it contacts protein S13 of the 30S subunit (bridge B1b), connecting the 2 subunits; this bridge is implicated in subunit movement. Contacts the P site tRNA; the 5S rRNA and some of its associated proteins might help stabilize positioning of ribosome-bound tRNAs. This is Large ribosomal subunit protein uL5 from Streptococcus equi subsp. equi (strain 4047).